Here is a 230-residue protein sequence, read N- to C-terminus: MKAFIHTDWWDVLKPEFEKPYYHQLHEFLKNEYRTKNIHPDMYNIFQAFEWTPFADTKVVILGQDPYHGPGQAHGLSFSVLPGVAVPPSLVNIYKELQDDVGCTPVNHGYLESWAKQGVLLLNSVLTVQNGVAFSHAGKGWERLTDVAIQRLSERSTPVVFILWGKAARSKIKLIDTQTNVVLQAPHPSPLSAYRGFFGSKPFSKTNIALTSFGEQPINWQLPEHVNLEH.

The active-site Proton acceptor is Asp-65.

Belongs to the uracil-DNA glycosylase (UDG) superfamily. UNG family.

The protein localises to the cytoplasm. The catalysed reaction is Hydrolyzes single-stranded DNA or mismatched double-stranded DNA and polynucleotides, releasing free uracil.. Its function is as follows. Excises uracil residues from the DNA which can arise as a result of misincorporation of dUMP residues by DNA polymerase or due to deamination of cytosine. This Lactiplantibacillus plantarum (strain ATCC BAA-793 / NCIMB 8826 / WCFS1) (Lactobacillus plantarum) protein is Uracil-DNA glycosylase.